We begin with the raw amino-acid sequence, 507 residues long: Aromatase (507 aa).

C436 provides a ligand contact to heme.

Belongs to the cytochrome P450 family. Requires heme as cofactor.

Its subcellular location is the membrane. It catalyses the reaction testosterone + 3 reduced [NADPH--hemoprotein reductase] + 3 O2 = 17beta-estradiol + formate + 3 oxidized [NADPH--hemoprotein reductase] + 4 H2O + 4 H(+). The enzyme catalyses androst-4-ene-3,17-dione + 3 reduced [NADPH--hemoprotein reductase] + 3 O2 = estrone + formate + 3 oxidized [NADPH--hemoprotein reductase] + 4 H2O + 4 H(+). Catalyzes the formation of aromatic C18 estrogens from C19 androgens. The protein is Aromatase (CYP19A1) of Gallus gallus (Chicken).